A 124-amino-acid polypeptide reads, in one-letter code: Small ribosomal subunit protein uS12 (124 aa).

A disordered region spans residues 1-20 (MPTIQQLVRKGRTPKVVKTK). Over residues 9 to 18 (RKGRTPKVVK) the composition is skewed to basic residues. Asp89 carries the post-translational modification 3-methylthioaspartic acid.

It belongs to the universal ribosomal protein uS12 family. Part of the 30S ribosomal subunit. Contacts proteins S8 and S17. May interact with IF1 in the 30S initiation complex.

In terms of biological role, with S4 and S5 plays an important role in translational accuracy. Interacts with and stabilizes bases of the 16S rRNA that are involved in tRNA selection in the A site and with the mRNA backbone. Located at the interface of the 30S and 50S subunits, it traverses the body of the 30S subunit contacting proteins on the other side and probably holding the rRNA structure together. The combined cluster of proteins S8, S12 and S17 appears to hold together the shoulder and platform of the 30S subunit. This chain is Small ribosomal subunit protein uS12, found in Clavibacter michiganensis subsp. michiganensis (strain NCPPB 382).